We begin with the raw amino-acid sequence, 486 residues long: ATP synthase subunit beta (486 aa).

170 to 177 provides a ligand contact to ATP; it reads GGAGVGKT.

This sequence belongs to the ATPase alpha/beta chains family. In terms of assembly, F-type ATPases have 2 components, CF(1) - the catalytic core - and CF(0) - the membrane proton channel. CF(1) has five subunits: alpha(3), beta(3), gamma(1), delta(1), epsilon(1). CF(0) has three main subunits: a(1), b(2) and c(9-12). The alpha and beta chains form an alternating ring which encloses part of the gamma chain. CF(1) is attached to CF(0) by a central stalk formed by the gamma and epsilon chains, while a peripheral stalk is formed by the delta and b chains.

It is found in the cell membrane. The catalysed reaction is ATP + H2O + 4 H(+)(in) = ADP + phosphate + 5 H(+)(out). Its function is as follows. Produces ATP from ADP in the presence of a proton gradient across the membrane. The catalytic sites are hosted primarily by the beta subunits. In Clavibacter sepedonicus (Clavibacter michiganensis subsp. sepedonicus), this protein is ATP synthase subunit beta.